The chain runs to 254 residues: Imidazole glycerol phosphate synthase subunit HisF (254 aa).

Catalysis depends on residues aspartate 12 and aspartate 131.

The protein belongs to the HisA/HisF family. In terms of assembly, heterodimer of HisH and HisF.

Its subcellular location is the cytoplasm. It catalyses the reaction 5-[(5-phospho-1-deoxy-D-ribulos-1-ylimino)methylamino]-1-(5-phospho-beta-D-ribosyl)imidazole-4-carboxamide + L-glutamine = D-erythro-1-(imidazol-4-yl)glycerol 3-phosphate + 5-amino-1-(5-phospho-beta-D-ribosyl)imidazole-4-carboxamide + L-glutamate + H(+). The protein operates within amino-acid biosynthesis; L-histidine biosynthesis; L-histidine from 5-phospho-alpha-D-ribose 1-diphosphate: step 5/9. Its function is as follows. IGPS catalyzes the conversion of PRFAR and glutamine to IGP, AICAR and glutamate. The HisF subunit catalyzes the cyclization activity that produces IGP and AICAR from PRFAR using the ammonia provided by the HisH subunit. The protein is Imidazole glycerol phosphate synthase subunit HisF of Rhizorhabdus wittichii (strain DSM 6014 / CCUG 31198 / JCM 15750 / NBRC 105917 / EY 4224 / RW1) (Sphingomonas wittichii).